The following is a 428-amino-acid chain: Protein clpf-1 (428 aa).

ATP-binding positions include Glu-16, Arg-56, and 124-129; that span reads DVGKTT.

It belongs to the Clp1 family. Clp1 subfamily.

It is found in the nucleus. Its function is as follows. Required for endonucleolytic cleavage during polyadenylation-dependent pre-mRNA 3'-end formation. This is Protein clpf-1 from Caenorhabditis elegans.